We begin with the raw amino-acid sequence, 1392 residues long: Protein dispatched homolog 3 (1392 aa).

The Cytoplasmic portion of the chain corresponds to 1 to 73 (MDTEDDPLLQ…LGWAFTNPCC (73 aa)). Positions 16 to 40 (EEQEEEEATGETFLGAQKPGPQPGA) are disordered. The helical transmembrane segment at 74 to 94 (AGLVLFLGCSIPMALSAFMFL) threads the bilayer. At 95–462 (YYPPLDIDIS…YEVRRTFNND (368 aa)) the chain is on the lumenal side. The interval 162–248 (GNRSRQASRA…HAAVAANQSR (87 aa)) is disordered. N-linked (GlcNAc...) asparagine glycosylation is present at Asn163. The span at 190 to 199 (SAAQKPTANR) shows a compositional bias: polar residues. The SSD domain occupies 457–615 (RTFNNDMLLA…LVTMPAALGL (159 aa)). The chain crosses the membrane as a helical span at residues 463–483 (MLLAFISSSCIAALVYILTSC). Residue Ser484 is a topological domain, cytoplasmic. A helical transmembrane segment spans residues 485 to 505 (VFLSFFGIASIGLSCLVALFL). Over 506–508 (YHV) the chain is Lumenal. A helical transmembrane segment spans residues 509–529 (VFGIQYLGILNGVAAFVIVGI). Residues 530–573 (GVDDVFVFINTYRQATHLEDPQLRMIHTVQTAGKATFFTSLTTA) lie on the Cytoplasmic side of the membrane. A helical transmembrane segment spans residues 574 to 594 (AAYAANVFSQIPAVHDFGLFM). A topological domain (lumenal) is located at residue Ser595. A helical transmembrane segment spans residues 596-616 (LIVSCCWLAVLVTMPAALGLW). Residues 617 to 729 (SLYLAPLESS…WVLWSAVKSR (113 aa)) lie on the Cytoplasmic side of the membrane. The chain crosses the membrane as a helical span at residues 730–750 (WVIVGLFVSILILSLVFASRL). The Lumenal portion of the chain corresponds to 751 to 1182 (RPASRAPLLF…IFMEIVGVQS (432 aa)). Asn1021 is a glycosylation site (N-linked (GlcNAc...) asparagine). Residues 1183-1203 (ALCGLVLSLLICVAAVAVFTT) traverse the membrane as a helical segment. Residue His1204 is a topological domain, cytoplasmic. Residues 1205 to 1225 (ILLLLPVLLSILGIVCLVVTI) traverse the membrane as a helical segment. Over 1226 to 1291 (MYWSGWEMGA…TLEAVRHVGV (66 aa)) the chain is Lumenal. A helical transmembrane segment spans residues 1292–1312 (AIVSSALTTVIATVPLFFCII). Residues 1313-1320 (APFAKFGK) are Cytoplasmic-facing. Residues 1321 to 1341 (IVALNTGVSILYTLTVSTALL) traverse the membrane as a helical segment. Topologically, residues 1342-1358 (GIMAPSSFTRTRTSFLK) are lumenal. The chain crosses the membrane as a helical span at residues 1359–1379 (ALGAVLLAGALGLGACLVLLQ). Residues 1380-1392 (SGYKIPLPAGASL) lie on the Cytoplasmic side of the membrane.

The protein belongs to the patched family. Expressed in brain and testis.

It is found in the endoplasmic reticulum membrane. It localises to the nucleus membrane. The protein localises to the cytoplasmic vesicle membrane. Functionally, plays a role in neuronal proliferation and differentiation. Plays a role in the accumulation of cellular cholesterol. Involved in intracellular lipid droplet formation. May contribute to cholesterol homeostasis in neuronal cells. The protein is Protein dispatched homolog 3 of Homo sapiens (Human).